The sequence spans 29 residues: Cytochrome b6-f complex subunit 8 (29 aa).

A helical membrane pass occupies residues 3–23; that stretch reads ITSIAWGALMVVFTFSLSLVV.

Belongs to the PetN family. The 4 large subunits of the cytochrome b6-f complex are cytochrome b6, subunit IV (17 kDa polypeptide, PetD), cytochrome f and the Rieske protein, while the 4 small subunits are PetG, PetL, PetM and PetN. The complex functions as a dimer.

The protein localises to the plastid membrane. Functionally, component of the cytochrome b6-f complex, which mediates electron transfer between photosystem II (PSII) and photosystem I (PSI), cyclic electron flow around PSI, and state transitions. The chain is Cytochrome b6-f complex subunit 8 from Aneura mirabilis (Parasitic liverwort).